The sequence spans 431 residues: SPI-1 type 3 secretion system ATPase (431 aa).

162 to 167 (GCGKTM) is an ATP binding site.

It belongs to the ATPase alpha/beta chains family. T3SS ATPase subfamily. In terms of assembly, the core secretion machinery of the T3SS is composed of approximately 20 different proteins, including cytoplasmic components, a base, an export apparatus and a needle. This subunit is part of the cytosolic complex. Forms homohexamers.

It is found in the cytoplasm. The catalysed reaction is ATP + H2O + cellular proteinSide 1 = ADP + phosphate + cellular proteinSide 2.. ATPase component of the type III secretion system (T3SS), also called injectisome, which is used to inject bacterial effector proteins into eukaryotic host cells. Acts as a molecular motor to provide the energy that is required for the export of proteins. Required for type III secretion apparatus (T3SA) formation, proper protein secretion, host cell invasion and virulence. May play a critical role in T3SS substrate recognition, disassembly of the effector/chaperone complex and unfolding of the effector in an ATP-dependent manner prior to secretion. This is SPI-1 type 3 secretion system ATPase from Salmonella typhi.